A 120-amino-acid chain; its full sequence is Immunoglobulin lambda variable 4-60 (120 aa).

The first 21 residues, 1-21, serve as a signal peptide directing secretion; it reads MAWTPLLLLFPLLLHCTGSLS. The interval 22-46 is framework-1; the sequence is QPVLTQSSSASASLGSSVKLTCTLS. The Ig-like domain occupies 23 to 120; the sequence is PVLTQSSSAS…YYCETWDSNT (98 aa). C43 and C113 are disulfide-bonded. Residues 47-53 form a complementarity-determining-1 region; it reads SGHSSYI. The framework-2 stretch occupies residues 54-70; it reads IAWHQQQPGKAPRYLMK. The interval 71–77 is complementarity-determining-2; sequence LEGSGSY. Residues 78 to 113 form a framework-3 region; the sequence is NKGSGVPDRFSGSSSGADRYLTISNLQFEDEADYYC. The complementarity-determining-3 stretch occupies residues 114–120; that stretch reads ETWDSNT.

In terms of assembly, immunoglobulins are composed of two identical heavy chains and two identical light chains; disulfide-linked.

It is found in the secreted. It localises to the cell membrane. Functionally, v region of the variable domain of immunoglobulin light chains that participates in the antigen recognition. Immunoglobulins, also known as antibodies, are membrane-bound or secreted glycoproteins produced by B lymphocytes. In the recognition phase of humoral immunity, the membrane-bound immunoglobulins serve as receptors which, upon binding of a specific antigen, trigger the clonal expansion and differentiation of B lymphocytes into immunoglobulins-secreting plasma cells. Secreted immunoglobulins mediate the effector phase of humoral immunity, which results in the elimination of bound antigens. The antigen binding site is formed by the variable domain of one heavy chain, together with that of its associated light chain. Thus, each immunoglobulin has two antigen binding sites with remarkable affinity for a particular antigen. The variable domains are assembled by a process called V-(D)-J rearrangement and can then be subjected to somatic hypermutations which, after exposure to antigen and selection, allow affinity maturation for a particular antigen. The sequence is that of Immunoglobulin lambda variable 4-60 from Homo sapiens (Human).